Here is a 215-residue protein sequence, read N- to C-terminus: Variable small protein 6 (215 aa).

Positions M1–S18 are cleaved as a signal peptide. C19 is lipidated: N-palmitoyl cysteine. A lipid anchor (S-diacylglycerol cysteine) is attached at C19.

It belongs to the variable small protein (Vsp) family.

Its subcellular location is the cell outer membrane. In terms of biological role, the Vlp and Vsp proteins are antigenically distinct proteins, only one vlp or vsp gene is transcriptionally active at any one time. Switching between these genes is a mechanism of host immune response evasion. The polypeptide is Variable small protein 6 (Borrelia hermsii).